The chain runs to 269 residues: Phosphatidylglycerol--prolipoprotein diacylglyceryl transferase (269 aa).

7 helical membrane passes run 17-37 (LKIHWYGLMYLIGIGGAWLLA), 56-76 (LVFWLSMGVIVGGRLGYVLFY), 92-112 (WKGGMSFHGGFIGVMLAALWF), 120-140 (FFELMDFVAPLVPIGLGAGRI), 174-194 (PSQLYQFALEGVALFVILWLY), 202-222 (MAVSGMFALFYGIFRFIVEFV), and 237-257 (LTMGQLLCVPMIVGGLFLIWL). Arginine 139 contributes to the a 1,2-diacyl-sn-glycero-3-phospho-(1'-sn-glycerol) binding site.

It belongs to the Lgt family.

The protein resides in the cell inner membrane. The enzyme catalyses L-cysteinyl-[prolipoprotein] + a 1,2-diacyl-sn-glycero-3-phospho-(1'-sn-glycerol) = an S-1,2-diacyl-sn-glyceryl-L-cysteinyl-[prolipoprotein] + sn-glycerol 1-phosphate + H(+). Its pathway is protein modification; lipoprotein biosynthesis (diacylglyceryl transfer). In terms of biological role, catalyzes the transfer of the diacylglyceryl group from phosphatidylglycerol to the sulfhydryl group of the N-terminal cysteine of a prolipoprotein, the first step in the formation of mature lipoproteins. This is Phosphatidylglycerol--prolipoprotein diacylglyceryl transferase from Pseudomonas putida (strain W619).